Here is an 868-residue protein sequence, read N- to C-terminus: DNA mismatch repair protein MutS (868 aa).

ATP is bound at residue glycine 621–serine 628. A disordered region spans residues leucine 803 to proline 852. Over residues proline 823 to glutamate 832 the composition is skewed to pro residues.

Belongs to the DNA mismatch repair MutS family.

Its function is as follows. This protein is involved in the repair of mismatches in DNA. It is possible that it carries out the mismatch recognition step. This protein has a weak ATPase activity. The protein is DNA mismatch repair protein MutS of Halorhodospira halophila (strain DSM 244 / SL1) (Ectothiorhodospira halophila (strain DSM 244 / SL1)).